The primary structure comprises 141 residues: UPF0179 protein Cmaq_1008 (141 aa).

It belongs to the UPF0179 family.

This Caldivirga maquilingensis (strain ATCC 700844 / DSM 13496 / JCM 10307 / IC-167) protein is UPF0179 protein Cmaq_1008.